Here is a 94-residue protein sequence, read N- to C-terminus: MKGSSALLVALTVLCICGLTRAEDDNEFFMEFLQTLLVGTPEELYEGPLGKYNVNDMAKAALTELKSCIDELQPVHKEQLVKLLVQVLDAQEDT.

An N-terminal signal peptide occupies residues 1–22; it reads MKGSSALLVALTVLCICGLTRA.

It belongs to the secretoglobin family. Expressed in the olfactory mucosa.

The protein resides in the secreted. The sequence is that of Secretoglobin family 1C member 1 (Scgb1c1) from Rattus norvegicus (Rat).